The following is a 392-amino-acid chain: Glutamine synthetase (392 aa).

A GS beta-grasp domain is found at 26 to 106; that stretch reads VQVTYVWIDG…VMCEVLKYNR (81 aa). The GS catalytic domain maps to 113–392; that stretch reads LRHTCKKIME…MASPRDAAVF (280 aa). Position 134 (E134) interacts with ATP. Mn(2+)-binding residues include E134, E136, E196, and E203. ATP is bound at residue 203 to 208; sequence EFQVGP. L-glutamate is bound at residue 246–247; it reads NW. Position 253 (H253) interacts with Mn(2+). ATP contacts are provided by residues 255-257, R319, and R324; that span reads NYS. R319 contributes to the L-glutamate binding site. 336–338 contacts ADP; the sequence is YFE. Residue E338 coordinates Mn(2+). Residue R340 coordinates L-glutamate.

It belongs to the glutamine synthetase family. Mg(2+) serves as cofactor. The cofactor is Mn(2+).

Its subcellular location is the cytoplasm. It is found in the cytosol. It localises to the microsome. The protein localises to the mitochondrion. The enzyme catalyses L-glutamate + NH4(+) + ATP = L-glutamine + ADP + phosphate + H(+). Glutamine synthetase that catalyzes the ATP-dependent conversion of glutamate and ammonia to glutamine. This chain is Glutamine synthetase, found in Xenopus laevis (African clawed frog).